The primary structure comprises 190 residues: Endo-1,4-beta-xylanase (190 aa).

Positions Q1–S190 constitute a GH11 domain. The active-site Nucleophile is the E86. Catalysis depends on E177, which acts as the Proton donor.

The protein belongs to the glycosyl hydrolase 11 (cellulase G) family.

The enzyme catalyses Endohydrolysis of (1-&gt;4)-beta-D-xylosidic linkages in xylans.. It functions in the pathway glycan degradation; xylan degradation. The protein is Endo-1,4-beta-xylanase of Trichoderma harzianum (Hypocrea lixii).